Consider the following 176-residue polypeptide: Ribose 1,5-bisphosphate phosphokinase PhnN (176 aa).

Position 10–17 (10–17 (GPSGAGKD)) interacts with ATP.

This sequence belongs to the ribose 1,5-bisphosphokinase family.

The catalysed reaction is alpha-D-ribose 1,5-bisphosphate + ATP = 5-phospho-alpha-D-ribose 1-diphosphate + ADP. It participates in metabolic intermediate biosynthesis; 5-phospho-alpha-D-ribose 1-diphosphate biosynthesis; 5-phospho-alpha-D-ribose 1-diphosphate from D-ribose 5-phosphate (route II): step 3/3. Its function is as follows. Catalyzes the phosphorylation of ribose 1,5-bisphosphate to 5-phospho-D-ribosyl alpha-1-diphosphate (PRPP). The sequence is that of Ribose 1,5-bisphosphate phosphokinase PhnN from Methylobacterium radiotolerans (strain ATCC 27329 / DSM 1819 / JCM 2831 / NBRC 15690 / NCIMB 10815 / 0-1).